Reading from the N-terminus, the 307-residue chain is MAGFMYAPYNVYQGYGGNFGQNPHVAQPLAKNKQAAWKSNKASEPTDYLDNFQRAQLKAILSQVNPNLTPRLRKANTKEIGVQVNPRVDTGVQCSLGPRTLRRPPPPPCSPVKAADCVRFTRPLAVYSPVVDRRLFSLPQGGRLPKKSPDSQSQPLKERAPSPEDKEREKVSEKEPDTKDELEKRPVPGTEEPGNEEQTKSAFQFLEQKYGYFHCKDCKTRWESAYVWCISGSNKVYFKQLCRKCQKGYNPYRVEAIQCQVCAKTRCSCPQKQRHIDLKRPHRQELCGRCKNKRLSCDNTYSYKYIV.

A disordered region spans residues Leu138–Lys200. The segment covering Leu156–Pro186 has biased composition (basic and acidic residues). The segment at Gln208–Lys293 adopts a 3CxxC-type zinc-finger fold.

Belongs to the ZAR1 family. As to expression, expressed in oocytes.

It is found in the cytoplasm. Its subcellular location is the cytoplasmic ribonucleoprotein granule. Its function is as follows. mRNA-binding protein required for maternal mRNA storage, translation and degradation during oocyte maturation. Probably promotes formation of some phase-separated membraneless compartment that stores maternal mRNAs in oocytes: acts by undergoing liquid-liquid phase separation upon binding to maternal mRNAs. Binds to the 3'-UTR of maternal mRNAs, inhibiting their translation. This is Zygote arrest protein 2.L (zar2.L) from Xenopus laevis (African clawed frog).